The sequence spans 244 residues: Small ribosomal subunit protein eS4 (244 aa).

Positions 37 to 123 (VPLAILLKYY…AKYKFVRIMN (87 aa)) constitute an S4 RNA-binding domain.

Belongs to the eukaryotic ribosomal protein eS4 family.

The protein is Small ribosomal subunit protein eS4 (rps4e) of Sulfolobus acidocaldarius (strain ATCC 33909 / DSM 639 / JCM 8929 / NBRC 15157 / NCIMB 11770).